Here is a 1286-residue protein sequence, read N- to C-terminus: MAVISKVTYSLYDQKEINATDIIISHIKNDDDIGTVKDGRLGAMDGALCKTCGKTELECFGHWGKVSIYKTHIVKPEFISEIIRLLNHICIHCGLLRSREPYSDDINLKELSVHALRRLKDKILSKKKSCWNSECMQPYQKITFSKKKVCFVNKLDDINVPNSLIYQKLISIHEKFWPLLEIHQYPANLFYTDYFPIPPLIIRPAISFWIDSIPKETNELTYLLGMIVKNCNLNADEQVIQKAVIEYDDIKIISNNTTSINLSYITSGKNNMIRSYIVARRKDQTARSVIGPSTSITVNEVGMPTYIRNTLTEKIFVNAFTVDKVKQLLASNQVKFYFNKRLNQLTRIRQGKFIKNKIHLLPGDWVEVAVQEYTSIIFGRQPSLHRYNVIASSIRATEGDTIKISPGIANSQNADFDGDEEWMILEQNPKAVVEQSILMYPTTLLKHDIHGAPVYGSIQDEIVAAYSLFRIQDLCLDEVLNILGKYGREFDPKGKCKFSGKDIYTYLIGEKINYPGLLKDGEIIANDVDSNFVVAMRHLSLAGLLSDHKSNVEGINFIIKSSYVFKRYLSIYGFGVTFKDLRPNSTFTNKLEAINVEKIELIKEAYAKYLKDVRDGKIVPLSKALEADYLESMLSNLTNLNIREIEEHMRQTLIDDPDNNLLKMAKAGYKVNPTELMYILGTYGQQRIDGEPAETRVLGRVLPYYLPDSKDPEGRGYILNSLTKGLTGSQYYFSMLVARSQSTDIVCETSRTGTLARKIIKKMEDMVVDGYGQVVIGNTLIKYAANYTKILGSVCKPVDLIYPDESMTWYLEISALWNKIKQGFVYSQKQKLAKKTLAPFNFLVFVKPTTEDNAIKVKDLYDMIHNVIDDVREKYFFTVSNIDFMEYIFLTHLNPSRIRITKETAITIFEKFYEKLNYTLGGGTPIGIISAQVLSEKFTQQALSSFHTTEKSGAVKQKLGFNEFNNLTNLSKNKTEIITLVSDDISKLQSVKINFEFVCLGELNPDITLRKETDRYVVDIIVNRLYIKRAEITELVVEYMIERFISFSVIVKEWGMETFIEDEDNIRFTIYLNFVEPEELNLSKFMMVLPGAANKGKISKFKIPISDYTGYNDFNQTKKLNKMTVELMNLKELGSFDLENVNVYPGVWNTYDIFGIEAARGYLCEAMLNTYGEGFDYLYQPCDLLASLLCASYEPESVNKFKFGAASTLKRATFGDNKALLNAALHKKSEPINDNSSCHFFSKVPNIGTGYYKYFIDLGLLMRMERKLSDKISSQKIKEIEETEDF.

The protein belongs to the poxviridae DNA-directed RNA polymerase 147 kDa subunit family. As to quaternary structure, the DNA-dependent RNA polymerase used for intermediate and late genes expression consists of eight subunits Rpo30/OPG66, Rpo7/OPG90, Rpo22/OPG103, Rpo147/OPG105, Rpo18/OPG119, Rpo19/OPG131, Rpo132/OPG151 and Rpo35/OPG156. The same holoenzyme, with the addition of the transcription-specificity factor OPG109, is used for early gene expression.

It is found in the virion. The catalysed reaction is RNA(n) + a ribonucleoside 5'-triphosphate = RNA(n+1) + diphosphate. Its function is as follows. Part of the DNA-dependent RNA polymerase which catalyzes the transcription of viral DNA into RNA using the four ribonucleoside triphosphates as substrates. Responsible for the transcription of early, intermediate and late genes. DNA-dependent RNA polymerase associates with the early transcription factor (ETF), itself composed of OPG118 and OPG133, thereby allowing the early genes transcription. Late transcription, and probably also intermediate transcription, require newly synthesized RNA polymerase. The chain is DNA-directed RNA polymerase 147 kDa polypeptide (OPG105) from Monkeypox virus.